Here is a 352-residue protein sequence, read N- to C-terminus: F-box/kelch-repeat protein At1g57790 (352 aa).

The 47-residue stretch at 10-56 folds into the F-box domain; sequence KNLWKDLPLELLSSVMTFLEIKDNVRASVVCKSWFEAAVSVRVIDKS. Kelch repeat units follow at residues 148 to 189 and 190 to 234; these read VVFT…HNNV and VFSN…WNEG.

This Arabidopsis thaliana (Mouse-ear cress) protein is F-box/kelch-repeat protein At1g57790.